The chain runs to 145 residues: Small ribosomal subunit protein uS15 (145 aa).

The protein belongs to the universal ribosomal protein uS15 family. In terms of assembly, part of the 30S ribosomal subunit.

This Thermoplasma acidophilum (strain ATCC 25905 / DSM 1728 / JCM 9062 / NBRC 15155 / AMRC-C165) protein is Small ribosomal subunit protein uS15.